The chain runs to 126 residues: Small ribosomal subunit protein uS13 (126 aa).

The tract at residues 91-126 (RHRRGLPVRGQRTSTNARTRKGPRRAIAGKKKPGKK) is disordered. A compositionally biased stretch (basic residues) spans 108–126 (RTRKGPRRAIAGKKKPGKK).

The protein belongs to the universal ribosomal protein uS13 family. Part of the 30S ribosomal subunit. Forms a loose heterodimer with protein S19. Forms two bridges to the 50S subunit in the 70S ribosome.

In terms of biological role, located at the top of the head of the 30S subunit, it contacts several helices of the 16S rRNA. In the 70S ribosome it contacts the 23S rRNA (bridge B1a) and protein L5 of the 50S subunit (bridge B1b), connecting the 2 subunits; these bridges are implicated in subunit movement. Contacts the tRNAs in the A and P-sites. The sequence is that of Small ribosomal subunit protein uS13 from Streptomyces coelicolor (strain ATCC BAA-471 / A3(2) / M145).